Consider the following 391-residue polypeptide: ATP phosphoribosyltransferase regulatory subunit (391 aa).

It belongs to the class-II aminoacyl-tRNA synthetase family. HisZ subfamily. As to quaternary structure, heteromultimer composed of HisG and HisZ subunits.

Its subcellular location is the cytoplasm. It participates in amino-acid biosynthesis; L-histidine biosynthesis; L-histidine from 5-phospho-alpha-D-ribose 1-diphosphate: step 1/9. Functionally, required for the first step of histidine biosynthesis. May allow the feedback regulation of ATP phosphoribosyltransferase activity by histidine. The sequence is that of ATP phosphoribosyltransferase regulatory subunit from Nitrosomonas europaea (strain ATCC 19718 / CIP 103999 / KCTC 2705 / NBRC 14298).